Here is a 924-residue protein sequence, read N- to C-terminus: Periplasmic nitrate reductase (924 aa).

The tat-type signal signal peptide spans 1–30; that stretch reads MNRRDFIKNTAIASAASVAGLSVPSSMLGA. Residues 35-91 form the 4Fe-4S Mo/W bis-MGD-type domain; sequence WKWDKAVCRFCGTGCGIMIARKDGKIVATKGDPAAPVNRGLNCIKGYFNAKIMYGED. Cys42, Cys45, Cys49, and Cys77 together coordinate [4Fe-4S] cluster. Residues Lys79, Gln147, Asn172, Cys176, 209 to 216, Met417, Gln421, Asn527, 552 to 553, Lys575, Asp602, and 814 to 823 each bind Mo-bis(molybdopterin guanine dinucleotide); these read WGANMAEM, SD, and TGRVLEHWHS. Substrate is bound at residue Trp890. Asn898 and Lys915 together coordinate Mo-bis(molybdopterin guanine dinucleotide).

It belongs to the prokaryotic molybdopterin-containing oxidoreductase family. NasA/NapA/NarB subfamily. As to quaternary structure, component of the periplasmic nitrate reductase NapAB complex composed of NapA and NapB. The cofactor is [4Fe-4S] cluster. Mo-bis(molybdopterin guanine dinucleotide) serves as cofactor. Post-translationally, predicted to be exported by the Tat system. The position of the signal peptide cleavage has not been experimentally proven.

Its subcellular location is the periplasm. The enzyme catalyses 2 Fe(II)-[cytochrome] + nitrate + 2 H(+) = 2 Fe(III)-[cytochrome] + nitrite + H2O. Its function is as follows. Catalytic subunit of the periplasmic nitrate reductase complex NapAB. Receives electrons from NapB and catalyzes the reduction of nitrate to nitrite. This chain is Periplasmic nitrate reductase, found in Campylobacter jejuni subsp. jejuni serotype O:2 (strain ATCC 700819 / NCTC 11168).